Consider the following 95-residue polypeptide: Aspartyl/glutamyl-tRNA(Asn/Gln) amidotransferase subunit C (95 aa).

This sequence belongs to the GatC family. Heterotrimer of A, B and C subunits.

It catalyses the reaction L-glutamyl-tRNA(Gln) + L-glutamine + ATP + H2O = L-glutaminyl-tRNA(Gln) + L-glutamate + ADP + phosphate + H(+). It carries out the reaction L-aspartyl-tRNA(Asn) + L-glutamine + ATP + H2O = L-asparaginyl-tRNA(Asn) + L-glutamate + ADP + phosphate + 2 H(+). Its function is as follows. Allows the formation of correctly charged Asn-tRNA(Asn) or Gln-tRNA(Gln) through the transamidation of misacylated Asp-tRNA(Asn) or Glu-tRNA(Gln) in organisms which lack either or both of asparaginyl-tRNA or glutaminyl-tRNA synthetases. The reaction takes place in the presence of glutamine and ATP through an activated phospho-Asp-tRNA(Asn) or phospho-Glu-tRNA(Gln). The chain is Aspartyl/glutamyl-tRNA(Asn/Gln) amidotransferase subunit C from Brucella melitensis biotype 2 (strain ATCC 23457).